The primary structure comprises 124 residues: Large ribosomal subunit protein bL12c (124 aa).

The protein belongs to the bacterial ribosomal protein bL12 family. As to quaternary structure, homodimer. Part of the ribosomal stalk of the 50S ribosomal subunit. Forms a multimeric L10(L12)X complex, where L10 forms an elongated spine to which 2 to 4 L12 dimers bind in a sequential fashion. Binds GTP-bound translation factors.

The protein localises to the plastid. Its subcellular location is the chloroplast. Functionally, forms part of the ribosomal stalk which helps the ribosome interact with GTP-bound translation factors. Is thus essential for accurate translation. The protein is Large ribosomal subunit protein bL12c of Cyanidioschyzon merolae (strain NIES-3377 / 10D) (Unicellular red alga).